The sequence spans 84 residues: Delta-thalatoxin-Hhe1a (84 aa).

The first 19 residues, 1–19 (MAYQKIVFVALMLVLAVSA), serve as a signal peptide directing secretion. Residues 20-33 (MRLPDQQDQDISVA) constitute a propeptide that is removed on maturation. 3 cysteine pairs are disulfide-bonded: C38/C78, C40/C68, and C61/C79.

This sequence belongs to the sea anemone sodium channel inhibitory toxin family. Type II subfamily.

It localises to the secreted. Its subcellular location is the nematocyst. Binds specifically to the voltage-gated sodium channel (Nav) and delays its inactivation. This Heterodactyla hemprichii (Hemprich's sea anemone) protein is Delta-thalatoxin-Hhe1a.